We begin with the raw amino-acid sequence, 511 residues long: MTGDVILQISNLTKSFGPVKALKGVDFELRRGEIHAIAGENGAGKSTLMNIIDGILQPDSGEIRLDGTPVEIPSPAAAQKMGIGFVHQEIALCPDVSVAENIFMAATNSSRSFLMDYKGIEAKAREVFAQLSSIDPSVLVRDLSISNQQLVEIAKALTLDCRVLILDEPTAALTEAEAQVLFKIMRRLADQGISLIYISHRMVEIFDNCDRVSVFRDGRYVTTQDVAKITPADVVRAMVGREIGDLYPEKQRPEACSTTEVLRVENLCEAERFHDVSFSLHKGEILGFAGLIGAGRSEIAKGVCALEGQVTGRLWLNGEPLALRDYQDSIDAGIVYLSEDRKGDGVFLDMSIASNVSALKVEQVASALGLIQPGREIEQADRLGRKLNLKCGTLQDPVSSLSGGNQQKVALAKMLSVNPRLIFLDEPTRGVDVGAKAEIYRILRDLAEEGAGIVVISSELPELIGLCDRVLVIHEGCLSGEVSGPDMTEENIMHLASGTQQGTGAASVAAQ.

ABC transporter domains follow at residues leucine 7–glutamate 242 and cysteine 256–glutamine 500. Glycine 39–serine 46 is an ATP binding site.

The protein belongs to the ABC transporter superfamily. Ribose importer (TC 3.A.1.2.1) family. The complex is composed of an ATP-binding protein (RbsA), two transmembrane proteins (RbsC) and a solute-binding protein (RbsB).

It is found in the cell inner membrane. It carries out the reaction D-ribose(out) + ATP + H2O = D-ribose(in) + ADP + phosphate + H(+). Part of the ABC transporter complex RbsABC involved in ribose import. Responsible for energy coupling to the transport system. This is Ribose import ATP-binding protein RbsA from Ruegeria sp. (strain TM1040) (Silicibacter sp.).